The sequence spans 161 residues: Troponin C, slow skeletal and cardiac muscles (161 aa).

Met-1 is modified (N-acetylmethionine). EF-hand domains lie at Gln-16–Asn-51, Pro-52–Asp-87, Lys-92–Thr-127, and Ile-128–Glu-161. Ca(2+)-binding residues include Asp-65, Asp-67, Ser-69, Thr-71, Asp-105, Asn-107, Asp-109, Tyr-111, Glu-116, Asn-143, Asp-145, Arg-147, and Glu-152.

Belongs to the troponin C family.

Troponin is the central regulatory protein of striated muscle contraction. Tn consists of three components: Tn-I which is the inhibitor of actomyosin ATPase, Tn-T which contains the binding site for tropomyosin and Tn-C. The binding of calcium to Tn-C abolishes the inhibitory action of Tn on actin filaments. This is Troponin C, slow skeletal and cardiac muscles (TNNC1) from Coturnix japonica (Japanese quail).